Here is a 1578-residue protein sequence, read N- to C-terminus: Cilia- and flagella-associated protein 74 (1578 aa).

Over residues 1 to 14 (MEEPTVQFSDEDLV) the composition is skewed to acidic residues. 2 disordered regions span residues 1–21 (MEEP…PPMD) and 33–67 (EVER…TTKD). Basic and acidic residues predominate over residues 33–65 (EVERPSEGLEDEGSHSSAKKESKGAEKMRKSTT). 2 coiled-coil regions span residues 103–156 (RQRM…QSKI) and 330–378 (KYLF…RRQH).

It belongs to the CFAP74 family.

The protein resides in the cytoplasm. The protein localises to the cytoskeleton. Its subcellular location is the cilium axoneme. It is found in the flagellum axoneme. In terms of biological role, as part of the central apparatus of the cilium axoneme may play a role in cilium movement. May play an important role in sperm architecture and function. The chain is Cilia- and flagella-associated protein 74 from Mus musculus (Mouse).